Reading from the N-terminus, the 153-residue chain is MLAFNFFGATEGGLFDINATLPLMAIQVVALTYILNSLFFKPVGNVVEKREKFVSNNIIEAKNKLSEVKKLEADLLTQLQSARTEAQRIVSEAENESDKLYKEALELANNEANASKEKARLEIESQTSAARDQLSKQADDLSELIVNRLILEK.

The helical transmembrane segment at 23–40 threads the bilayer; it reads LMAIQVVALTYILNSLFF.

Belongs to the ATPase B chain family. As to quaternary structure, F-type ATPases have 2 components, F(1) - the catalytic core - and F(0) - the membrane proton channel. F(1) has five subunits: alpha(3), beta(3), gamma(1), delta(1), epsilon(1). F(0) has four main subunits: a(1), b(1), b'(1) and c(10-14). The alpha and beta chains form an alternating ring which encloses part of the gamma chain. F(1) is attached to F(0) by a central stalk formed by the gamma and epsilon chains, while a peripheral stalk is formed by the delta, b and b' chains.

It is found in the cellular thylakoid membrane. F(1)F(0) ATP synthase produces ATP from ADP in the presence of a proton or sodium gradient. F-type ATPases consist of two structural domains, F(1) containing the extramembraneous catalytic core and F(0) containing the membrane proton channel, linked together by a central stalk and a peripheral stalk. During catalysis, ATP synthesis in the catalytic domain of F(1) is coupled via a rotary mechanism of the central stalk subunits to proton translocation. Functionally, component of the F(0) channel, it forms part of the peripheral stalk, linking F(1) to F(0). The b'-subunit is a diverged and duplicated form of b found in plants and photosynthetic bacteria. The chain is ATP synthase subunit b' from Prochlorococcus marinus (strain AS9601).